We begin with the raw amino-acid sequence, 276 residues long: NH(3)-dependent NAD(+) synthetase (276 aa).

43 to 50 (GISGGVDS) contributes to the ATP binding site. Residue Asp-49 participates in Mg(2+) binding. Arg-146 serves as a coordination point for deamido-NAD(+). Thr-166 lines the ATP pocket. Residue Glu-171 participates in Mg(2+) binding. Deamido-NAD(+) contacts are provided by Lys-179 and Asp-186. 2 residues coordinate ATP: Lys-195 and Thr-217. Position 266–267 (266–267 (HK)) interacts with deamido-NAD(+).

It belongs to the NAD synthetase family. In terms of assembly, homodimer.

It carries out the reaction deamido-NAD(+) + NH4(+) + ATP = AMP + diphosphate + NAD(+) + H(+). The protein operates within cofactor biosynthesis; NAD(+) biosynthesis; NAD(+) from deamido-NAD(+) (ammonia route): step 1/1. Catalyzes the ATP-dependent amidation of deamido-NAD to form NAD. Uses ammonia as a nitrogen source. The sequence is that of NH(3)-dependent NAD(+) synthetase from Vibrio campbellii (strain ATCC BAA-1116).